Here is a 521-residue protein sequence, read N- to C-terminus: METETPMDVETKSTTSNTNDNNNNTTIVKTTSNIIKEGDHVILDINNGEKFSVIKVKLGSKVKIGKKQILINSIIGESYYSSFQVSNEKNTLERITQKEIDDRLNNLVELNQNDADNRNLDQNNTAQKLTQEDINEMKQKGTDSNTIIKTIVENSESFKTKTSFSQIKYLKKKIKKYSTIVKIIKPTLKSLTEAYYKKDSRKICGLRFDSFGQLLTLGNIRANSQVLVVETCMGLVTGSIAERMNGQGTILSAYIGKGPSLSIVNNFGFNTDVLNTIYPFNLNITSVLNKGEDISKLPPTASSGIYDKQVKEKEKEKEKDENVKDEKESGEEAKTIINQRNDTSNENIVKLLKDGGVWSLVIVTKYSPLNILLSCWPYLNSSGSFVIYSQFPQPLMEVHQFLHKNQMAVNQQISEIWMREHQVLPKRTHPMMGMDGASGFILYGTKVTKPIQKSTTTTTTTTTTTTNNSINPTKTTASLDIENKVIDATTSSSSSSTAAATTTEEDKEDSESALKKRKIDE.

3 disordered regions span residues 1–24 (METETPMDVETKSTTSNTNDNNNN), 305–336 (IYDKQVKEKEKEKEKDENVKDEKESGEEAKTI), and 452–521 (QKST…KIDE). The segment covering 12–24 (KSTTSNTNDNNNN) has biased composition (low complexity). The span at 308-334 (KQVKEKEKEKEKDENVKDEKESGEEAK) shows a compositional bias: basic and acidic residues. Low complexity-rich tracts occupy residues 452–476 (QKSTTTTTTTTTTTTNNSINPTKTT) and 487–502 (DATTSSSSSSTAAATT). Residues 510 to 521 (SESALKKRKIDE) are compositionally biased toward basic and acidic residues.

This sequence belongs to the TRM6/GCD10 family. Heterotetramer; composed of two copies of trmt6 and two copies of trmt61a.

It localises to the nucleus. Functionally, substrate-binding subunit of tRNA (adenine-N(1)-)-methyltransferase, which catalyzes the formation of N(1)-methyladenine at position 58 (m1A58) in initiator methionyl-tRNA. In Dictyostelium discoideum (Social amoeba), this protein is tRNA (adenine(58)-N(1))-methyltransferase non-catalytic subunit trm6 (trmt6).